A 314-amino-acid chain; its full sequence is MAEKGVKQKGELKTARIPIKIVPVDTPLRKPEWIRVKAGNSAGRFGEIKSMLREKKLHTVCEEAACPNIGECFGRGTATFMILGDICTRRCPFCDVGHGQPLPPNPNEPAELADSVSSLKLQYVVITSVDRDDLRDGGAQHFVDVVRAVREASPKTTIETLVPDFRGRMDIAIDILGNGLPDVLNHNMETVPRLYKQARPGADYAHSLALMKQFKARYPDVKTKSGLMVGLGETDEEILEVMRDLRANDVEMLTIGQYLAPSGHHLPVSRYVHPDTFKMFEEEAKKMGFSGAACAPMVRSSYWADQQAHSAGVA.

Cys61, Cys66, Cys72, Cys87, Cys91, Cys94, and Ser301 together coordinate [4Fe-4S] cluster. The Radical SAM core domain occupies Phe73–Ser290.

Belongs to the radical SAM superfamily. Lipoyl synthase family. The cofactor is [4Fe-4S] cluster.

The protein localises to the cytoplasm. The enzyme catalyses [[Fe-S] cluster scaffold protein carrying a second [4Fe-4S](2+) cluster] + N(6)-octanoyl-L-lysyl-[protein] + 2 oxidized [2Fe-2S]-[ferredoxin] + 2 S-adenosyl-L-methionine + 4 H(+) = [[Fe-S] cluster scaffold protein] + N(6)-[(R)-dihydrolipoyl]-L-lysyl-[protein] + 4 Fe(3+) + 2 hydrogen sulfide + 2 5'-deoxyadenosine + 2 L-methionine + 2 reduced [2Fe-2S]-[ferredoxin]. The protein operates within protein modification; protein lipoylation via endogenous pathway; protein N(6)-(lipoyl)lysine from octanoyl-[acyl-carrier-protein]: step 2/2. In terms of biological role, catalyzes the radical-mediated insertion of two sulfur atoms into the C-6 and C-8 positions of the octanoyl moiety bound to the lipoyl domains of lipoate-dependent enzymes, thereby converting the octanoylated domains into lipoylated derivatives. The polypeptide is Lipoyl synthase (Dechloromonas aromatica (strain RCB)).